The primary structure comprises 247 residues: TLC domain-containing protein 1 (247 aa).

The signal sequence occupies residues 1 to 27; it reads MPLLLHPAWPLLLGATLTFRALRRVLC. The Extracellular portion of the chain corresponds to 28–46; that stretch reads RLPLPAHVQTDPLRTWRWH. The region spanning 40–234 is the TLC domain; sequence LRTWRWHNLL…LLRSDFCPER (195 aa). A helical membrane pass occupies residues 47 to 67; the sequence is NLLVSFTHSIVSGIWALLCIW. At 68–83 the chain is on the cytoplasmic side; sequence QTPEMLVEIETAWSVC. A helical membrane pass occupies residues 84–104; the sequence is GYLLVCFSAGYFIHDTVDIVV. Topologically, residues 105 to 123 are extracellular; sequence SRQTRASWEYLVHHVMAMG. Residues 124-144 constitute an intramembrane region (helical); that stretch reads AFFSGIFWKRFVGGGVLTLLV. Residues 145–173 lie on the Extracellular side of the membrane; that stretch reads EVSNIFLTLRMMMKINNAQDILLYKVNKY. The helical transmembrane segment at 174-194 threads the bilayer; sequence VNLVMYFLFRLAPQAYLTKFF. The Cytoplasmic segment spans residues 195-201; sequence LQYAGQR. The chain crosses the membrane as a helical span at residues 202–222; the sequence is TLGTFLLSILLMLDVMILIYF. At 223-247 the chain is on the extracellular side; it reads SRLLRSDFCPERAPSRQQKDKFLTE.

Its subcellular location is the cell membrane. Its function is as follows. Regulates the composition and fluidity of the plasma membrane. Inhibits the incorporation of membrane-fluidizing phospholipids containing omega-3 long-chain polyunsaturated fatty acids (LCPUFA) and thereby promotes membrane rigidity. Does not appear to have any effect on LCPUFA synthesis. The sequence is that of TLC domain-containing protein 1 (Tlcd1) from Rattus norvegicus (Rat).